Here is a 1273-residue protein sequence, read N- to C-terminus: MQKGIRLNDGHVASLGLLARKDGTRKGYLSKRSSDNTKWQTKWFALLQNLLFYFESDSSSRPSGLYLLEGCVCDRAPSPKPALSAKEPLEKQHYFTVNFSHENQKALELRTEDAKDCDEWVAAIAHASYRTLATEHEALMQKYLHLLQIVETEKTVAKQLRQQIEDGEIEIERLKAEITSLLKDNERIQSTQTVAPNDEDSDIKKIKKVQSFLRGWLCRRKWKTIIQDYIRSPHADSMRKRNQVVFSMLEAEAEYVQQLHILVNNFLRPLRMAASSKKPPITHDDVSSIFLNSETIMFLHQIFYQGLKARISSWPTLVLADLFDILLPMLNIYQEFVRNHQYSLQILAHCKQNRDFDKLLKHYEAKPDCEERTLETFLTYPMFQIPRYILTLHELLAHTPHEHVERNSLDYAKSKLEELSRIMHDEVSETENIRKNLAIERMIIEGCEILLDTSQTFVRQGSLIQVPMSEKGKITRGRLGSLSLKKEGERQCFLFSKHLIICTRGSGGKLHLTKNGVISLIDCTLLEEPESTEEEAKGSGQDIDHLDFKIGVEPKDSPPFTVILVASSRQEKAAWTSDISQCVDNIRCNGLMMNAFEENSKVTVPQMIKRTREGTREAEMSRSDASLYCDDVDIRFSKTMNSCKVLQIRYASVERLLERLTDLRFLSIDFLNTFLHSYRVFTTAIVVLDKLITIYKKPISAIPARWLRSLELLFASGQNNKLLYGEPPKSPRATRKFSSPPPLSITKTSSPSRRRKLSLNIPIITGGKALDLAALSCNSNGYTSMYSAMSPFSKATLDTSKLYVSSSFTNKIPDEGDTTPEKPEDPSALSKQSSEVSMREESDIDQNQSDDGDTETSPTKSPTTPKSVKNKNSSEFPLFSYNNGVVMTSCRELDNNRSALSAASAFAIATAGANEGTPNKEKYRRMSLASAGFPPDQRNGDKEFVIRRAATNRVLNVLRHWVSKHSQDFETNDELKCKVIGFLEEVMHDPELLTQERKAAANIIRTLTQEDPGDNQITLEEITQMAEGVKAEPFENHSALEIAEQLTLLDHLVFKKIPYEEFFGQGWMKLEKNERTPYIMKTTKHFNDISNLIASEIIRNEDINARVSAIEKWVAVADICRCLHNYNAVLEITSSMNRSAIFRLKKTWLKVSKQTKALIDKLQKLVSSEGRFKNLREALKNCDPPCVPYLGMYLTDLAFIEEGTPNYTEDGLVNFSKMRMISHIIREIRQFQQTAYKIEHQAKVTQYLLDQSFVMDEESLYESSLRIEPKLPT.

A PH 1 domain is found at 22-129 (DGTRKGYLSK…WVAAIAHASY (108 aa)). The region spanning 204-229 (KKIKKVQSFLRGWLCRRKWKTIIQDY) is the IQ domain. The 187-residue stretch at 240–426 (KRNQVVFSML…EELSRIMHDE (187 aa)) folds into the DH domain. Residues 467–584 (PMSEKGKITR…WTSDISQCVD (118 aa)) form the PH 2 domain. A phosphoserine; by PLK2 mark is found at S577 and S626. One can recognise an N-terminal Ras-GEF domain in the interval 644 to 761 (KVLQIRYASV…SRRRKLSLNI (118 aa)). The segment at 724–754 (YGEPPKSPRATRKFSSPPPLSITKTSSPSRR) is disordered. Residue S758 is modified to Phosphoserine. A phosphoserine; by PLK2 mark is found at S779 and S800. The tract at residues 809-874 (TNKIPDEGDT…PKSVKNKNSS (66 aa)) is disordered. The span at 842 to 854 (SDIDQNQSDDGDT) shows a compositional bias: acidic residues. A compositionally biased stretch (low complexity) spans 855–867 (ETSPTKSPTTPKS). In terms of domain architecture, Ras-GEF spans 1038 to 1270 (SALEIAEQLT…YESSLRIEPK (233 aa)).

As to quaternary structure, homooligomer and heterooligomer with RASGRF2. Interacts with USP8, thereby regulating its stability. In terms of processing, phosphorylated by PLK2, leading to ubiquitination and degradation by the proteasome. Ubiquitinated and degraded following phosphorylation by PLK2. Post-translationally, phosphorylated by SRC and LCK. Phosphorylation by LCK increases its capacity to stimulate the GDP/GTP exchange on Ras, whereas its phosphorylation by SRC seems not to have an effect on stimulation activity.

Its function is as follows. Promotes the exchange of Ras-bound GDP by GTP. This is Ras-specific guanine nucleotide-releasing factor 1 (RASGRF1) from Homo sapiens (Human).